The following is a 492-amino-acid chain: Phytoene desaturase (lycopene-forming) (492 aa).

5-38 (VVIGAGFGGLALAIRLQAAGIPTVLLEQRDKPGG) contacts FAD.

It belongs to the carotenoid/retinoid oxidoreductase family. FAD is required as a cofactor.

It carries out the reaction 15-cis-phytoene + 4 A = all-trans-lycopene + 4 AH2. It participates in carotenoid biosynthesis; lycopene biosynthesis. This enzyme converts phytoene into lycopene via the intermediaries of phytofluene, zeta-carotene and neurosporene by the introduction of four double bonds. The sequence is that of Phytoene desaturase (lycopene-forming) (crtI) from Pseudescherichia vulneris (Escherichia vulneris).